The primary structure comprises 285 residues: Seipin (285 aa).

The Cytoplasmic portion of the chain corresponds to 1 to 16 (MKINVSRPLQFLQWSS). The chain crosses the membrane as a helical span at residues 17 to 37 (YIVVAFLIQLLIILPLSILIY). Topologically, residues 38–244 (HDFYLRLLPA…GLRNLMLRKR (207 aa)) are lumenal. Residues 245-265 (FLSYIIGISIFHCIICVLFFI) traverse the membrane as a helical segment. Residues 266–285 (TGCTAFIFVRKGQEKSKKHS) lie on the Cytoplasmic side of the membrane.

This sequence belongs to the seipin family.

It localises to the endoplasmic reticulum membrane. Involved in lipid metabolism and lipid droplet (LD) morphology, number, and size. Facilitates initiation of LD formation, and ensures that vectorial budding of LDs from the ER is directed towards the cytoplasm. This chain is Seipin, found in Saccharomyces cerevisiae (strain ATCC 204508 / S288c) (Baker's yeast).